The sequence spans 478 residues: Protein nucleotidyltransferase YdiU (478 aa).

ATP-binding residues include glycine 84, glycine 86, arginine 87, lysine 107, aspartate 119, glycine 120, arginine 170, and arginine 177. The active-site Proton acceptor is the aspartate 246. Positions 247 and 256 each coordinate Mg(2+). Aspartate 256 provides a ligand contact to ATP.

Belongs to the SELO family. Requires Mg(2+) as cofactor. Mn(2+) is required as a cofactor.

The enzyme catalyses L-seryl-[protein] + ATP = 3-O-(5'-adenylyl)-L-seryl-[protein] + diphosphate. The catalysed reaction is L-threonyl-[protein] + ATP = 3-O-(5'-adenylyl)-L-threonyl-[protein] + diphosphate. It catalyses the reaction L-tyrosyl-[protein] + ATP = O-(5'-adenylyl)-L-tyrosyl-[protein] + diphosphate. It carries out the reaction L-histidyl-[protein] + UTP = N(tele)-(5'-uridylyl)-L-histidyl-[protein] + diphosphate. The enzyme catalyses L-seryl-[protein] + UTP = O-(5'-uridylyl)-L-seryl-[protein] + diphosphate. The catalysed reaction is L-tyrosyl-[protein] + UTP = O-(5'-uridylyl)-L-tyrosyl-[protein] + diphosphate. Functionally, nucleotidyltransferase involved in the post-translational modification of proteins. It can catalyze the addition of adenosine monophosphate (AMP) or uridine monophosphate (UMP) to a protein, resulting in modifications known as AMPylation and UMPylation. This is Protein nucleotidyltransferase YdiU from Escherichia coli (strain K12 / MC4100 / BW2952).